A 153-amino-acid polypeptide reads, in one-letter code: Superoxide dismutase [Cu-Zn] (153 aa).

Cu cation is bound by residues His-45, His-47, and His-62. A disulfide bridge connects residues Cys-56 and Cys-145. Residues His-62, His-70, His-79, and Asp-82 each contribute to the Zn(2+) site. His-119 contributes to the Cu cation binding site.

This sequence belongs to the Cu-Zn superoxide dismutase family. Homodimer. The cofactor is Cu cation. Zn(2+) is required as a cofactor.

It localises to the cytoplasm. It carries out the reaction 2 superoxide + 2 H(+) = H2O2 + O2. Its function is as follows. Destroys radicals which are normally produced within the cells and which are toxic to biological systems. In Drosophila erecta (Fruit fly), this protein is Superoxide dismutase [Cu-Zn].